Consider the following 342-residue polypeptide: N-acetyl-gamma-glutamyl-phosphate reductase (342 aa).

C147 is an active-site residue.

It belongs to the NAGSA dehydrogenase family. Type 1 subfamily.

The protein resides in the cytoplasm. It carries out the reaction N-acetyl-L-glutamate 5-semialdehyde + phosphate + NADP(+) = N-acetyl-L-glutamyl 5-phosphate + NADPH + H(+). It participates in amino-acid biosynthesis; L-arginine biosynthesis; N(2)-acetyl-L-ornithine from L-glutamate: step 3/4. Functionally, catalyzes the NADPH-dependent reduction of N-acetyl-5-glutamyl phosphate to yield N-acetyl-L-glutamate 5-semialdehyde. The protein is N-acetyl-gamma-glutamyl-phosphate reductase of Campylobacter jejuni subsp. jejuni serotype O:23/36 (strain 81-176).